Here is a 415-residue protein sequence, read N- to C-terminus: Protein maelstrom homolog (415 aa).

Positions 4 to 73 (KKAARNAYFF…DPDSTSTYND (70 aa)) form a DNA-binding region, HMG box. The interval 367–399 (SSDPKYSTDKSERSSFEPRGVKPYQGPSGGGRG) is disordered. Over residues 372–386 (YSTDKSERSSFEPRG) the composition is skewed to basic and acidic residues.

Belongs to the maelstrom family.

The protein localises to the cytoplasm. It is found in the nucleus. Plays a central role during spermatogenesis by repressing transposable elements and preventing their mobilization, which is essential for the germline integrity. Acts via the piRNA metabolic process, which mediates the repression of transposable elements during meiosis by forming complexes composed of piRNAs and Piwi proteins and governs the methylation and subsequent repression of transposons. Its association with piP-bodies suggests a participation in the secondary piRNAs metabolic process. Required for the localization of germ-cell factors to the meiotic nuage. In Xenopus tropicalis (Western clawed frog), this protein is Protein maelstrom homolog (mael).